A 182-amino-acid polypeptide reads, in one-letter code: Lipid A acyltransferase PagP (182 aa).

Residues 1–21 form the signal peptide; it reads MTQYFRALAFFLLLVPATAMA. Residue Cys22 is the site of N-palmitoyl cysteine attachment. Cys22 carries S-diacylglycerol cysteine lipidation. Residues His55, Asp98, and Ser99 contribute to the active site.

The protein belongs to the lipid A palmitoyltransferase family. Homodimer.

The protein localises to the cell outer membrane. The catalysed reaction is a lipid A + a 1,2-diacyl-sn-glycero-3-phosphocholine = a hepta-acyl lipid A + a 2-acyl-sn-glycero-3-phosphocholine. The enzyme catalyses a lipid IVA + a 1,2-diacyl-sn-glycero-3-phosphocholine = a lipid IVB + a 2-acyl-sn-glycero-3-phosphocholine. It catalyses the reaction a lipid IIA + a 1,2-diacyl-sn-glycero-3-phosphocholine = a lipid IIB + a 2-acyl-sn-glycero-3-phosphocholine. Functionally, transfers a fatty acid residue from the sn-1 position of a phospholipid to the N-linked hydroxyfatty acid chain on the proximal unit of lipid A or its precursors. Required for resistance to cationic antimicrobial peptides (CAMPs). Modifications of lipid A with an acyl chain to evade host immune defenses by resisting antibody-mediated complement lysis during respiratory infection. This is Lipid A acyltransferase PagP from Bordetella bronchiseptica (strain ATCC BAA-588 / NCTC 13252 / RB50) (Alcaligenes bronchisepticus).